The primary structure comprises 238 residues: uncharacterized protein (238 aa).

This is an uncharacterized protein from Acheta domesticus (House cricket).